Reading from the N-terminus, the 162-residue chain is Large ribosomal subunit protein uL15 (162 aa).

Over residues Met1–Arg13 the composition is skewed to basic and acidic residues. Residues Met1–Lys39 form a disordered region. The span at Arg21–Val35 shows a compositional bias: gly residues.

It belongs to the universal ribosomal protein uL15 family. In terms of assembly, part of the 50S ribosomal subunit.

Binds to the 23S rRNA. In Gluconobacter oxydans (strain 621H) (Gluconobacter suboxydans), this protein is Large ribosomal subunit protein uL15.